A 218-amino-acid chain; its full sequence is C-type lectin domain family 2 member H (218 aa).

At 1-52 (MNAAKVETSSMGMLQRADLTAADCLQEGEMGKKIQGKCFRIISTVSPVKLYC) the chain is on the cytoplasmic side. The chain crosses the membrane as a helical; Signal-anchor for type II membrane protein span at residues 53-73 (CYGVIMVLTVAVIALSVALSV). The Extracellular segment spans residues 74–218 (RNKIPAMEDR…SRVGSVPRHV (145 aa)). Residues Cys-90 and Cys-101 are joined by a disulfide bond. A C-type lectin domain is found at 97–201 (FGSKCFYFSE…SYTHRKWICS (105 aa)). Asn-110 carries an N-linked (GlcNAc...) asparagine glycan. Cys-118 and Cys-200 form a disulfide bridge.

As to expression, detected in ileum, liver, kidney and in IL2-activated natural killer cells.

It localises to the cell membrane. In terms of biological role, lectin-type cell surface receptor. This is C-type lectin domain family 2 member H (Clec2h) from Mus musculus (Mouse).